Consider the following 224-residue polypeptide: Superoxide dismutase [Mn], mitochondrial (224 aa).

The N-terminal 20 residues, 1-20 (MLLARAFARRSLRAGLWCRQ), are a transit peptide targeting the mitochondrion. 4 residues coordinate Mn(2+): His-46, His-94, Asp-177, and His-181.

The protein belongs to the iron/manganese superoxide dismutase family. As to quaternary structure, homotetramer. Mn(2+) is required as a cofactor.

It localises to the mitochondrion matrix. It carries out the reaction 2 superoxide + 2 H(+) = H2O2 + O2. In terms of biological role, destroys superoxide anion radicals which are normally produced within the cells and which are toxic to biological systems. The polypeptide is Superoxide dismutase [Mn], mitochondrial (Charybdis feriata (Crucifix crab)).